A 404-amino-acid polypeptide reads, in one-letter code: S-adenosylmethionine synthase (404 aa).

Histidine 18 contacts ATP. Aspartate 20 contributes to the Mg(2+) binding site. Position 46 (glutamate 46) interacts with K(+). L-methionine-binding residues include glutamate 59 and glutamine 102. The tract at residues 102-112 (QSPEIAQGVDH) is flexible loop. ATP is bound by residues 178–180 (DGK), 249–250 (KF), aspartate 258, 264–265 (RK), alanine 281, and lysine 285. Aspartate 258 lines the L-methionine pocket. Residue lysine 289 participates in L-methionine binding.

The protein belongs to the AdoMet synthase family. In terms of assembly, homotetramer; dimer of dimers. The cofactor is Mg(2+). Requires K(+) as cofactor.

It localises to the cytoplasm. The catalysed reaction is L-methionine + ATP + H2O = S-adenosyl-L-methionine + phosphate + diphosphate. It functions in the pathway amino-acid biosynthesis; S-adenosyl-L-methionine biosynthesis; S-adenosyl-L-methionine from L-methionine: step 1/1. Its function is as follows. Catalyzes the formation of S-adenosylmethionine (AdoMet) from methionine and ATP. The overall synthetic reaction is composed of two sequential steps, AdoMet formation and the subsequent tripolyphosphate hydrolysis which occurs prior to release of AdoMet from the enzyme. This chain is S-adenosylmethionine synthase, found in Rhodococcus opacus (strain B4).